Reading from the N-terminus, the 348-residue chain is Ketol-acid reductoisomerase (NADP(+)) (348 aa).

The 181-residue stretch at Ala2 to Thr182 folds into the KARI N-terminal Rossmann domain. Residues Tyr25 to Gln28, Ser51, Ser53, and Asp83 to Gln86 contribute to the NADP(+) site. His108 is a catalytic residue. Gly134 contacts NADP(+). The 146-residue stretch at Thr183–Leu328 folds into the KARI C-terminal knotted domain. Mg(2+)-binding residues include Asp191, Glu195, Glu227, and Glu231. Residue Ser252 participates in substrate binding.

The protein belongs to the ketol-acid reductoisomerase family. Mg(2+) is required as a cofactor.

It carries out the reaction (2R)-2,3-dihydroxy-3-methylbutanoate + NADP(+) = (2S)-2-acetolactate + NADPH + H(+). The enzyme catalyses (2R,3R)-2,3-dihydroxy-3-methylpentanoate + NADP(+) = (S)-2-ethyl-2-hydroxy-3-oxobutanoate + NADPH + H(+). It participates in amino-acid biosynthesis; L-isoleucine biosynthesis; L-isoleucine from 2-oxobutanoate: step 2/4. It functions in the pathway amino-acid biosynthesis; L-valine biosynthesis; L-valine from pyruvate: step 2/4. Involved in the biosynthesis of branched-chain amino acids (BCAA). Catalyzes an alkyl-migration followed by a ketol-acid reduction of (S)-2-acetolactate (S2AL) to yield (R)-2,3-dihydroxy-isovalerate. In the isomerase reaction, S2AL is rearranged via a Mg-dependent methyl migration to produce 3-hydroxy-3-methyl-2-ketobutyrate (HMKB). In the reductase reaction, this 2-ketoacid undergoes a metal-dependent reduction by NADPH to yield (R)-2,3-dihydroxy-isovalerate. This Acidobacterium capsulatum (strain ATCC 51196 / DSM 11244 / BCRC 80197 / JCM 7670 / NBRC 15755 / NCIMB 13165 / 161) protein is Ketol-acid reductoisomerase (NADP(+)).